The following is a 267-amino-acid chain: Energy-coupling factor transporter transmembrane protein EcfT (267 aa).

Helical transmembrane passes span 26–46 (IILT…WGYL), 73–93 (ILFI…GTVI), 116–136 (LFLL…IALT), 151–171 (VPVH…PTLL), and 247–267 (LVTG…YVFF).

This sequence belongs to the energy-coupling factor EcfT family. As to quaternary structure, forms a stable energy-coupling factor (ECF) transporter complex composed of 2 membrane-embedded substrate-binding proteins (S component), 2 ATP-binding proteins (A component) and 2 transmembrane proteins (T component). May be able to interact with more than 1 S component at a time.

The protein resides in the cell membrane. Transmembrane (T) component of an energy-coupling factor (ECF) ABC-transporter complex. Unlike classic ABC transporters this ECF transporter provides the energy necessary to transport a number of different substrates. This Ruminiclostridium cellulolyticum (strain ATCC 35319 / DSM 5812 / JCM 6584 / H10) (Clostridium cellulolyticum) protein is Energy-coupling factor transporter transmembrane protein EcfT.